The primary structure comprises 176 residues: ATP-dependent protease subunit HslV (176 aa).

Thr-2 is a catalytic residue. Na(+)-binding residues include Gly-157, Cys-160, and Thr-163.

Belongs to the peptidase T1B family. HslV subfamily. A double ring-shaped homohexamer of HslV is capped on each side by a ring-shaped HslU homohexamer. The assembly of the HslU/HslV complex is dependent on binding of ATP.

It localises to the cytoplasm. It carries out the reaction ATP-dependent cleavage of peptide bonds with broad specificity.. Allosterically activated by HslU binding. Protease subunit of a proteasome-like degradation complex believed to be a general protein degrading machinery. The protein is ATP-dependent protease subunit HslV of Pseudomonas entomophila (strain L48).